A 166-amino-acid polypeptide reads, in one-letter code: NAD(P)H-quinone oxidoreductase subunit I, chloroplastic (166 aa).

2 consecutive 4Fe-4S ferredoxin-type domains span residues 55–84 (GRIH…VDWK) and 95–124 (LNYS…MTEE). 8 residues coordinate [4Fe-4S] cluster: C64, C67, C70, C74, C104, C107, C110, and C114.

This sequence belongs to the complex I 23 kDa subunit family. NDH is composed of at least 16 different subunits, 5 of which are encoded in the nucleus. [4Fe-4S] cluster is required as a cofactor.

It localises to the plastid. The protein resides in the chloroplast thylakoid membrane. The catalysed reaction is a plastoquinone + NADH + (n+1) H(+)(in) = a plastoquinol + NAD(+) + n H(+)(out). It catalyses the reaction a plastoquinone + NADPH + (n+1) H(+)(in) = a plastoquinol + NADP(+) + n H(+)(out). Functionally, NDH shuttles electrons from NAD(P)H:plastoquinone, via FMN and iron-sulfur (Fe-S) centers, to quinones in the photosynthetic chain and possibly in a chloroplast respiratory chain. The immediate electron acceptor for the enzyme in this species is believed to be plastoquinone. Couples the redox reaction to proton translocation, and thus conserves the redox energy in a proton gradient. The sequence is that of NAD(P)H-quinone oxidoreductase subunit I, chloroplastic from Melampodium leucanthum (Black foot daisy).